A 335-amino-acid polypeptide reads, in one-letter code: NmrA-like family domain-containing oxidoreductase lnbB (335 aa).

Residues 14-18, 41-45, 62-63, 83-85, lysine 142, and 166-169 each bind NADP(+); these read GTGNQ, RHPDS, DG, TNS, and YYEQ.

It belongs to the NmrA-type oxidoreductase family.

It functions in the pathway secondary metabolite biosynthesis. NmrA-like family domain-containing oxidoreductase; part of the lnb gene cluster that mediates the biosynthesis of diastereomeric piperazines. Lna and lnb clusters encode sets of enzymes that produce overlapping sets of previously undescribed metabolites such as piperazinomycin-like metabolites or morpholine. The lna and lnb biosynthetic pathways appear to be part of a signaling network that controls the formation of sclerotia, a resilient overwintering structure. One primary function of the non-canonical nonribosomal peptide synthetases lnaA and lnbA consists in the reduction of L-tyrosine. The presence in the clusters of tailoring enzymes such as the oxidoreductases lnaB, lnbB, lnaE or lnbE, as well as of the cytochrome P450 monooxygenases lnaC, lnaD, or lnbC, might explain formation of various diastereomeric piperazines. This Aspergillus flavus (strain ATCC 200026 / FGSC A1120 / IAM 13836 / NRRL 3357 / JCM 12722 / SRRC 167) protein is NmrA-like family domain-containing oxidoreductase lnbB.